Reading from the N-terminus, the 406-residue chain is DNA primase large subunit PriL (406 aa).

Residues Cys-302, Cys-375, Cys-384, and Cys-389 each coordinate [4Fe-4S] cluster.

Belongs to the eukaryotic-type primase large subunit family. Heterodimer of a small subunit (PriS) and a large subunit (PriL). Requires [4Fe-4S] cluster as cofactor.

Functionally, regulatory subunit of DNA primase, an RNA polymerase that catalyzes the synthesis of short RNA molecules used as primers for DNA polymerase during DNA replication. Stabilizes and modulates the activity of the small subunit, increasing the rate of DNA synthesis, and conferring RNA synthesis capability. The DNA polymerase activity may enable DNA primase to also catalyze primer extension after primer synthesis. May also play a role in DNA repair. The protein is DNA primase large subunit PriL of Methanopyrus kandleri (strain AV19 / DSM 6324 / JCM 9639 / NBRC 100938).